Consider the following 109-residue polypeptide: U3-lycotoxin-Ls1x (109 aa).

The N-terminal stretch at 1–20 (MKFVLLFGVLLVTLFSYSSA) is a signal peptide. A propeptide spanning residues 21-44 (EMLDDFDQADEDELLSLIEKEEAR) is cleaved from the precursor. 4 disulfide bridges follow: C48/C63, C55/C72, C62/C88, and C74/C86.

The protein belongs to the neurotoxin 19 (CSTX) family. 01 subfamily. Expressed by the venom gland.

The protein localises to the secreted. In Lycosa singoriensis (Wolf spider), this protein is U3-lycotoxin-Ls1x.